Here is a 448-residue protein sequence, read N- to C-terminus: UDP-N-acetylmuramoylalanine--D-glutamate ligase (448 aa).

ATP is bound at residue 116–122 (GSNAKST).

It belongs to the MurCDEF family.

The protein resides in the cytoplasm. The catalysed reaction is UDP-N-acetyl-alpha-D-muramoyl-L-alanine + D-glutamate + ATP = UDP-N-acetyl-alpha-D-muramoyl-L-alanyl-D-glutamate + ADP + phosphate + H(+). It functions in the pathway cell wall biogenesis; peptidoglycan biosynthesis. In terms of biological role, cell wall formation. Catalyzes the addition of glutamate to the nucleotide precursor UDP-N-acetylmuramoyl-L-alanine (UMA). This Pseudomonas fluorescens (strain ATCC BAA-477 / NRRL B-23932 / Pf-5) protein is UDP-N-acetylmuramoylalanine--D-glutamate ligase.